Consider the following 78-residue polypeptide: Acyl carrier protein (78 aa).

One can recognise a Carrier domain in the interval 2–77; sequence SEIASRVKAI…DAVAYIEEHA (76 aa). O-(pantetheine 4'-phosphoryl)serine is present on Ser-37.

This sequence belongs to the acyl carrier protein (ACP) family. Post-translationally, 4'-phosphopantetheine is transferred from CoA to a specific serine of apo-ACP by AcpS. This modification is essential for activity because fatty acids are bound in thioester linkage to the sulfhydryl of the prosthetic group.

Its subcellular location is the cytoplasm. It functions in the pathway lipid metabolism; fatty acid biosynthesis. Functionally, carrier of the growing fatty acid chain in fatty acid biosynthesis. This chain is Acyl carrier protein, found in Bacteroides fragilis (strain ATCC 25285 / DSM 2151 / CCUG 4856 / JCM 11019 / LMG 10263 / NCTC 9343 / Onslow / VPI 2553 / EN-2).